The chain runs to 260 residues: 2-amino-3,7-dideoxy-D-threo-hept-6-ulosonate synthase 1 (260 aa).

The Proton acceptor role is filled by aspartate 26. Residues 26 to 30 (DHGIT) and 144 to 146 (YPR) each bind 1-deoxy-D-threo-hexo-2,5-diulose 6-phosphate. Residue tyrosine 144 is the Proton donor of the active site. The Schiff-base intermediate with substrate role is filled by lysine 172. 1-deoxy-D-threo-hexo-2,5-diulose 6-phosphate contacts are provided by residues 194–195 (GG) and 221–222 (GR).

Belongs to the DeoC/FbaB aldolase family. ADHS subfamily. Homodecamer.

The catalysed reaction is 1-deoxy-D-threo-hexo-2,5-diulose 6-phosphate + L-aspartate 4-semialdehyde = 2,3-dioxopropyl phosphate + 2-amino-2,3,7-trideoxy-D-lyxo-hept-6-ulosonate. In terms of biological role, catalyzes a transaldol reaction between 6-deoxy-5-ketofructose 1-phosphate (DKFP) and L-aspartate semialdehyde (ASA) with an elimination of hydroxypyruvaldehyde phosphate to yield 2-amino-3,7-dideoxy-D-threo-hept-6-ulosonate (ADH). Plays a key role in an alternative pathway of the biosynthesis of 3-dehydroquinate (DHQ), which is involved in the canonical pathway for the biosynthesis of aromatic amino acids. The protein is 2-amino-3,7-dideoxy-D-threo-hept-6-ulosonate synthase 1 of Archaeoglobus fulgidus (strain ATCC 49558 / DSM 4304 / JCM 9628 / NBRC 100126 / VC-16).